Here is a 157-residue protein sequence, read N- to C-terminus: UPF0225 protein Psyr_3863 (157 aa).

It belongs to the UPF0225 family.

In Pseudomonas syringae pv. syringae (strain B728a), this protein is UPF0225 protein Psyr_3863.